The sequence spans 1670 residues: MSSVKVAVRVRPFNSREIARESKCIIEMAGATTAITNPKVPPNTSDSVKRFNFDYSYWSHDHHDADFSTQSMVYKDIGEEMLQHSFDGYNVCIFAYGQTGAGKSYTMMGRQEEQQEGIIPMICKDLFTRIQDTETDDLKYSVEVSYMEIYCERVRDLLNPKNKGNLRVREHPLLGPYVEDLSKLAVTDYQDIHDLIDEGNKARTVAATNMNETSSRSHAVFTIFFTQRRHDLMTNLTTEKVSKISLVDLAGSERADSTGAKGTRLKEGANINKSLTTLGKVISALAEVASKKKNTKKADFIPYRDSALTWLLRENLGGNSKTAMIAAISPADINYDETLSTLRYADRAKQIVCKAVVNEDANAKLIRELKEEIQKLRDLLKAEGIEVQEEDELTKSTVIKSPTKSRNRNGSTTEMAVDQLQASEKLIAELNETWEEKLKRTEEIRVQREAVFAEMGVAVKEDGITVGVFSPKKTPHLVNLNEDPNLSECLLYYIKEGLTRLGTHEANVPQDIQLSGSHILKEHCTFENKNSTVTLLPHKDAIIYVNGRKLVEPEVLKTGSRVILGKNHVFRFTNPEQARELRDKIETENEAENEVEKTDTQQVDWNFAQCELLEKQGIDLKAEMKKRLDNLEEQYKREKLQADQQFEEQRKTYEARIDALQKQVEEQSMTMSMYSSYSPEDFHQEEDVYTNPMYESCWTAREAGLAAWAFRKWRYHQFTSLRDDLWGNAIFLKEANAISVELKKKVQFQFTLLTDTLYSPLPPELASTVAPVHQEDEFGAPPVSKTLVAVEVTDTKNGATHHWSLEKLRQRLELMREMYHNEAEMSPTSPDYNVESLTGGDPFYDRFPWFRMVGRSFIYLSNLLYPVPLVHKVAIVNERGDVRGYLRIAVQPVLDEESIDFNNGVKQSARLVFNEDDAKPKYRALNEKDDVQRYIDNGGLDSKLEELEDVDSGRGIDSNSASECHENSEEPGEHLQVGKEFTFRVTVLQATGIGAEYADIFCQFNFLHRHEEAFSTEPVKNSASGAPLGFYHVQNITVPVTKSFIEYLKTQPIMFKIFGHYQTHPLHKDAKQDFVSRPPPRRMLPPSIPISQPVRSPKFGPLPCAPTSTVLAKHDVLVWFEICELAPNGEYVPSVVEHSDDLPCRGLFLLHQGIQRRIRITIVHEPTTEVKWKDINELVVGRIRNTPESSDEQDEDACVLSLGLFPGEALEVPGDDRSFYRFEAAWDSSLHNSALLNRVSQGGETIYITLSAYLELENCARPAIITKDLSMVIYGRDARTGPRSLKHLFSGQYRNPEANRLTGVYELALRRASEAGSPGVQRRQRRVLDTSSTYVRGEENLHGWRPRGDSLIFDHQWELEKLTRLEEVGRMRHLLLLRERLGMDTNPNPTTKTEKDVCNLAARAATSPVHMVIPQSPQTPVKDPQQIIPEREYNQREQDLMLKCLKLVQGRYTKSEANDTQTQSDVSPSDEGCADMTVSCISSNSMENNKFVIRRRLCSPDRADAPNGWEAPAPATQPALPLRLYVPELEEIRVSPVVARKGLLNVLEHGGSGWKKRWVIVRRPYVFIYRSEKDPVERAVLNLATAHVECSEDQAAMVKIPNTFSVVTKHRGYLLQTLGDKEVHDWLYAINPLLAGQIKSRLARRTLEPASQTASQIQATNAANANSASK.

The 349-residue stretch at 3–351 (SVKVAVRVRP…LRYADRAKQI (349 aa)) folds into the Kinesin motor domain. Residue 97–104 (GQTGAGKS) coordinates ATP. Positions 358–436 (NEDANAKLIR…IAELNETWEE (79 aa)) form a coiled coil. Residues 499-565 (TRLGTHEANV…LKTGSRVILG (67 aa)) enclose the FHA domain. Residues 576–674 (EQARELRDKI…EEQSMTMSMY (99 aa)) are a coiled coil. A disordered region spans residues 951-975 (DSGRGIDSNSASECHENSEEPGEHL). A compositionally biased stretch (basic and acidic residues) spans 963 to 975 (ECHENSEEPGEHL). Thr1406 carries the post-translational modification Phosphothreonine. Ser1416 is subject to Phosphoserine. Phosphothreonine is present on Thr1419. The 99-residue stretch at 1537-1635 (VVARKGLLNV…WLYAINPLLA (99 aa)) folds into the PH domain.

The protein belongs to the TRAFAC class myosin-kinesin ATPase superfamily. Kinesin family. Unc-104 subfamily. Monomer. Interacts with Arl8. In terms of tissue distribution, expressed in muscles.

Its subcellular location is the cytoplasm. It localises to the cytoskeleton. The protein resides in the cell projection. The protein localises to the axon. Its function is as follows. Required for presynaptic maturation, has a role in axonal transport of dense-core vesicles carrying synaptic vesicle precursors, components required for the morphological transformation of axonal growth cones to mature boutons. This chain is Kinesin-like protein unc-104 (unc-104), found in Drosophila melanogaster (Fruit fly).